Reading from the N-terminus, the 649-residue chain is Solute carrier family 22 member 16 (649 aa).

A helical transmembrane segment spans residues 19–39; sequence FQIVLYLICAYQSLSCGIHYL. Residues Asn-65 and Asn-108 are each glycosylated (N-linked (GlcNAc...) asparagine). Transmembrane regions (helical) follow at residues 156-176, 190-210, 214-234, 244-264, and 268-288; these read MIQPLIIFGVMLGSITFSYLS, IGVFFFGIASLFIFDYLSFMI, FLVMASSGYFVVVFVYVMEII, IHLNTFFAIGAMLVALASYLL, and WLYQIILCIVTTPFILCCWML. Residue Asn-315 is glycosylated (N-linked (GlcNAc...) asparagine). 6 helical membrane passes run 356-376, 389-409, 417-437, 445-465, 475-495, and 501-521; these read AKMTLIVWLDWFTANLGYYMF, LYLLLVGAMEIPAYICLCIWL, TMLLFLLVSSLTCMLHVVMPS, MVALLVKSVISSVFAFIYLYT, CLAVGSSNMVSHVSSIFIPFT, and VWIFLPQILFGILAILSGLLS. Residues 530 to 544 are compositionally biased toward polar residues; it reads TPMKSTWETTEQQVP. 2 disordered regions span residues 530 to 560 and 579 to 649; these read TPMKSTWETTEQQVPENKDSLGEGPPDSFER and SPDA…LGGF.

Belongs to the major facilitator (TC 2.A.1) superfamily. Organic cation transporter (TC 2.A.1.19) family.

It localises to the cell membrane. It carries out the reaction (R)-carnitine(in) = (R)-carnitine(out). The catalysed reaction is spermidine(in) = spermidine(out). Functionally, facilitative organic cation transporter that mediates the transport of carnitine as well as the polyamine spermidine. Mediates the partially Na(+)-dependent bidirectional transport of carnitine. May mediate L-carnitine secretion from testis epididymal epithelium into the lumen which is involved in the maturation of spermatozoa. This chain is Solute carrier family 22 member 16, found in Mus musculus (Mouse).